Consider the following 407-residue polypeptide: Argininosuccinate synthase (407 aa).

Residues 16 to 24 (AYSGGLDTS) and Ala44 contribute to the ATP site. Tyr96 and Ser101 together coordinate L-citrulline. Gly126 provides a ligand contact to ATP. L-aspartate-binding residues include Thr128, Asn132, and Asp133. Asn132 is an L-citrulline binding site. Arg136, Ser185, Ser194, Glu270, and Tyr282 together coordinate L-citrulline.

Belongs to the argininosuccinate synthase family. Type 1 subfamily. In terms of assembly, homotetramer.

The protein localises to the cytoplasm. The catalysed reaction is L-citrulline + L-aspartate + ATP = 2-(N(omega)-L-arginino)succinate + AMP + diphosphate + H(+). Its pathway is amino-acid biosynthesis; L-arginine biosynthesis; L-arginine from L-ornithine and carbamoyl phosphate: step 2/3. This chain is Argininosuccinate synthase, found in Shewanella denitrificans (strain OS217 / ATCC BAA-1090 / DSM 15013).